The following is a 319-amino-acid chain: Quinolinate synthase (319 aa).

Iminosuccinate is bound by residues His-34 and Ser-51. Cys-96 contacts [4Fe-4S] cluster. Residues 122-124 (YIN) and Ser-139 contribute to the iminosuccinate site. Cys-182 lines the [4Fe-4S] cluster pocket. Residues 208 to 210 (HPE) and Thr-225 each bind iminosuccinate. Cys-276 lines the [4Fe-4S] cluster pocket.

Belongs to the quinolinate synthase family. Type 2 subfamily. It depends on [4Fe-4S] cluster as a cofactor.

The protein localises to the cytoplasm. It catalyses the reaction iminosuccinate + dihydroxyacetone phosphate = quinolinate + phosphate + 2 H2O + H(+). Its pathway is cofactor biosynthesis; NAD(+) biosynthesis; quinolinate from iminoaspartate: step 1/1. In terms of biological role, catalyzes the condensation of iminoaspartate with dihydroxyacetone phosphate to form quinolinate. This chain is Quinolinate synthase, found in Thermosynechococcus vestitus (strain NIES-2133 / IAM M-273 / BP-1).